A 104-amino-acid chain; its full sequence is Large ribosomal subunit protein uL24 (104 aa).

The disordered stretch occupies residues 41 to 61; sequence ISKKHKKPTPNEKQSGGIFEK.

Belongs to the universal ribosomal protein uL24 family. Part of the 50S ribosomal subunit.

Its function is as follows. One of two assembly initiator proteins, it binds directly to the 5'-end of the 23S rRNA, where it nucleates assembly of the 50S subunit. Functionally, one of the proteins that surrounds the polypeptide exit tunnel on the outside of the subunit. This chain is Large ribosomal subunit protein uL24, found in Wigglesworthia glossinidia brevipalpis.